A 68-amino-acid chain; its full sequence is Palustrin-1c (68 aa).

Positions 1 to 22 (MFTMKKSLLLLFFLGTISLSLC) are cleaved as a signal peptide. Residues 23 to 39 (EEERGADEEEGDGEKLT) constitute a propeptide that is removed on maturation. A disulfide bond links cysteine 62 and cysteine 68.

Expressed by the skin glands.

It is found in the secreted. Its function is as follows. Antimicrobial peptide. In Odorrana versabilis (Chinese bamboo leaf odorous frog), this protein is Palustrin-1c.